We begin with the raw amino-acid sequence, 144 residues long: MNLNELQPAAGSRHVRNRVGRGTSSGNGKTSGRGQKGQKARGKVRLGFEGGQMPLYRRIPKRGFTNISRKEFAVVNLNKLNSFDDGTEITPTLLIENGIVKNQKSGIKILAVGQLEKKLTVKAHKFSAAAVAAIEQAGGSTEVL.

A disordered region spans residues 1–44 (MNLNELQPAAGSRHVRNRVGRGTSSGNGKTSGRGQKGQKARGKV). The segment covering 23-35 (TSSGNGKTSGRGQ) has biased composition (gly residues).

The protein belongs to the universal ribosomal protein uL15 family. In terms of assembly, part of the 50S ribosomal subunit.

Its function is as follows. Binds to the 23S rRNA. The chain is Large ribosomal subunit protein uL15 from Leuconostoc mesenteroides subsp. mesenteroides (strain ATCC 8293 / DSM 20343 / BCRC 11652 / CCM 1803 / JCM 6124 / NCDO 523 / NBRC 100496 / NCIMB 8023 / NCTC 12954 / NRRL B-1118 / 37Y).